A 110-amino-acid polypeptide reads, in one-letter code: PTS system oligo-beta-mannoside-specific EIIA component (110 aa).

Positions 9 to 107 constitute a PTS EIIA type-3 domain; that stretch reads LTDEQISFQL…VKEMLDLFKT (99 aa). The active-site Tele-phosphohistidine intermediate is the H83. H83 is modified (phosphohistidine; by HPr).

The protein localises to the cytoplasm. In terms of biological role, the phosphoenolpyruvate-dependent sugar phosphotransferase system (sugar PTS), a major carbohydrate active transport system, catalyzes the phosphorylation of incoming sugar substrates concomitantly with their translocation across the cell membrane. The enzyme II GmuABC PTS system is involved in the transport of oligo-glucomannans such as cellobiose or mannobiose. The protein is PTS system oligo-beta-mannoside-specific EIIA component of Bacillus subtilis (strain 168).